Consider the following 63-residue polypeptide: Large ribosomal subunit protein uL30 (63 aa).

The protein belongs to the universal ribosomal protein uL30 family. In terms of assembly, part of the 50S ribosomal subunit.

The sequence is that of Large ribosomal subunit protein uL30 from Xanthomonas axonopodis pv. citri (strain 306).